The sequence spans 89 residues: MKTLHLQIEGRVQGVWFRESMRREAERLGVDGWVRNRPDGSVEAVVQGTDEAVAALVAWAKMGPPLAHVERVDLSETEGEYSGFEKRSD.

Positions 3–88 constitute an Acylphosphatase-like domain; it reads TLHLQIEGRV…GEYSGFEKRS (86 aa). Residues Arg18 and Asn36 contribute to the active site.

The protein belongs to the acylphosphatase family.

It catalyses the reaction an acyl phosphate + H2O = a carboxylate + phosphate + H(+). This Thiobacillus denitrificans (strain ATCC 25259 / T1) protein is Acylphosphatase (acyP).